Reading from the N-terminus, the 245-residue chain is UPF0246 protein Cgl1995/cg2186 (245 aa).

It belongs to the UPF0246 family.

This chain is UPF0246 protein Cgl1995/cg2186, found in Corynebacterium glutamicum (strain ATCC 13032 / DSM 20300 / JCM 1318 / BCRC 11384 / CCUG 27702 / LMG 3730 / NBRC 12168 / NCIMB 10025 / NRRL B-2784 / 534).